A 416-amino-acid polypeptide reads, in one-letter code: Tiggy-winkle hedgehog protein (416 aa).

The first 26 residues, 1–26, serve as a signal peptide directing secretion; the sequence is MDVRLHLKQFALLCFISLLLTPCGLA. Cysteine 27 carries the N-palmitoyl cysteine lipid modification. 7 residues coordinate Ca(2+): glutamate 92, glutamate 93, aspartate 98, threonine 128, glutamate 129, aspartate 132, and aspartate 134. Residues histidine 143, aspartate 150, and histidine 185 each contribute to the Zn(2+) site. Glycine 200 carries the Cholesterol glycine ester lipid modification.

This sequence belongs to the hedgehog family. In terms of assembly, multimer. As to quaternary structure, interacts with HHATL/GUP1 which negatively regulates HHAT-mediated palmitoylation of the TWHH N-terminus. Interacts with BOC and CDON. Interacts with HHIP. Interacts with DISP1 via its cholesterol anchor. Interacts with SCUBE2. Post-translationally, the C-terminal domain displays an autoproteolysis activity and a cholesterol transferase activity. Both activities result in the cleavage of the full-length protein into two parts (N-product and C-product) followed by the covalent attachment of a cholesterol moiety to the C-terminal of the newly generated N-product. Cholesterylation is required for the tiggy-winkle hedgehog protein N-product targeting to lipid rafts and multimerization. N-product is the active species in both local and long-range signaling, whereas the C-product is degraded in the endoplasmic reticulum. N-palmitoylation by HHAT of N-product is required for tiggy-winkle hedgehog protein N-product multimerization and full activity. It is a prerequisite for the membrane-proximal positioning and the subsequent shedding of this N-terminal peptide. In terms of processing, the lipidated N- and C-terminal peptides of N-product can be cleaved (shedding). The N-terminal palmitoylated peptide is cleaved at the Cardin-Weintraub (CW) motif site. The cleavage reduced the interactions with heparan sulfate. The cleavage is enhanced by SCUBE2. In terms of tissue distribution, expressed in the ventral midline of the neural tube and brain. In the developing brain, expression occurs in domains that include a discrete region in the floor of the diencephalon. Not detected in the notochord or developing fin bud.

It is found in the cell membrane. The protein localises to the endoplasmic reticulum membrane. The protein resides in the golgi apparatus membrane. The C-terminal part of the tiggy-winkle hedgehog protein precursor displays an autoproteolysis and a cholesterol transferase activity. Both activities result in the cleavage of the full-length protein into two parts (N-product and C-product) followed by the covalent attachment of a cholesterol moiety to the C-terminal of the newly generated N-product. Both activities occur in the endoplasmic reticulum. Once cleaved, the C-product is degraded in the endoplasmic reticulum. Functionally, the dually lipidated tiggy-winkle hedgehog protein N-product is a morphogen which is essential for a variety of patterning events during development. Involved in dorso-ventral patterning of the brain and in early patterning of the developing eyes. Binds to the patched (PTCH1) receptor, which functions in association with smoothened (SMO), to activate the transcription of target genes. In Danio rerio (Zebrafish), this protein is Tiggy-winkle hedgehog protein (shhb).